A 345-amino-acid polypeptide reads, in one-letter code: UDP-3-O-acylglucosamine N-acyltransferase (345 aa).

Histidine 248 serves as the catalytic Proton acceptor.

The protein belongs to the transferase hexapeptide repeat family. LpxD subfamily. As to quaternary structure, homotrimer.

The enzyme catalyses a UDP-3-O-[(3R)-3-hydroxyacyl]-alpha-D-glucosamine + a (3R)-hydroxyacyl-[ACP] = a UDP-2-N,3-O-bis[(3R)-3-hydroxyacyl]-alpha-D-glucosamine + holo-[ACP] + H(+). Its pathway is bacterial outer membrane biogenesis; LPS lipid A biosynthesis. Its function is as follows. Catalyzes the N-acylation of UDP-3-O-acylglucosamine using 3-hydroxyacyl-ACP as the acyl donor. Is involved in the biosynthesis of lipid A, a phosphorylated glycolipid that anchors the lipopolysaccharide to the outer membrane of the cell. The sequence is that of UDP-3-O-acylglucosamine N-acyltransferase from Prochlorococcus marinus (strain SARG / CCMP1375 / SS120).